The following is a 293-amino-acid chain: Acetyl-coenzyme A carboxylase carboxyl transferase subunit beta (293 aa).

Residues 29–293 (LWSKCPECGL…GSKSLELTNA (265 aa)) enclose the CoA carboxyltransferase N-terminal domain. Residues cysteine 33, cysteine 36, cysteine 52, and cysteine 55 each coordinate Zn(2+). Residues 33-55 (CPECGLVVYLKDLRLNASVCAGC) form a C4-type zinc finger.

It belongs to the AccD/PCCB family. Acetyl-CoA carboxylase is a heterohexamer composed of biotin carboxyl carrier protein (AccB), biotin carboxylase (AccC) and two subunits each of ACCase subunit alpha (AccA) and ACCase subunit beta (AccD). It depends on Zn(2+) as a cofactor.

The protein localises to the cytoplasm. It carries out the reaction N(6)-carboxybiotinyl-L-lysyl-[protein] + acetyl-CoA = N(6)-biotinyl-L-lysyl-[protein] + malonyl-CoA. It participates in lipid metabolism; malonyl-CoA biosynthesis; malonyl-CoA from acetyl-CoA: step 1/1. Functionally, component of the acetyl coenzyme A carboxylase (ACC) complex. Biotin carboxylase (BC) catalyzes the carboxylation of biotin on its carrier protein (BCCP) and then the CO(2) group is transferred by the transcarboxylase to acetyl-CoA to form malonyl-CoA. The chain is Acetyl-coenzyme A carboxylase carboxyl transferase subunit beta from Synechococcus sp. (strain CC9902).